The primary structure comprises 213 residues: Dimethyl sulfoxide reductase transcriptional activator (213 aa).

An HTH bat-type domain is found at 155-206; that stretch reads LTAKQREAALIAVHHGYYETPRRTELATLAEALGISKSALSQRLNAVEAKLA.

In terms of biological role, involved in activating dmsEABCD gene expression related to dimethyl sulfoxide (DMSO) reductase. Required for anaerobic respiration on dimethyl sulfoxide (DMSO). This is Dimethyl sulfoxide reductase transcriptional activator from Haloferax volcanii (strain ATCC 29605 / DSM 3757 / JCM 8879 / NBRC 14742 / NCIMB 2012 / VKM B-1768 / DS2) (Halobacterium volcanii).